A 583-amino-acid polypeptide reads, in one-letter code: L-arabonate dehydratase (583 aa).

Positions 56, 124, and 197 each coordinate [4Fe-4S] cluster.

Belongs to the IlvD/Edd family. As to quaternary structure, homodimer. The cofactor is [4Fe-4S] cluster.

The enzyme catalyses L-arabinonate = 2-dehydro-3-deoxy-L-arabinonate + H2O. With respect to regulation, activity is enhanced by Mg(2+), being optimal with a concentration of 1-10 mM Mg(2+). Functionally, catalyzes the dehydration of L-arabonate to L-2-keto-3-deoxyarabonate (L-KDA). Is involved in a degradation pathway of L-arabinose that allows A.brasilense to grow on L-arabinose as a sole carbon source. To a lesser extent, can also use D-xylonate as substrate, but not D-galactonate, D-arabonate, and D-gluconate. The protein is L-arabonate dehydratase (araC) of Azospirillum brasilense.